Here is a 117-residue protein sequence, read N- to C-terminus: MTSNPSSSADQPLSGTTVPGSVPGKAPEEPPVKFTRAAAVWSALIVGFLILILLLIFIAQNTASAQFAFFGWRWSLPLGVAILLAAVGGGLITVFAGTARILQLRRAAKKTHAAALR.

A compositionally biased stretch (polar residues) spans 1-19; sequence MTSNPSSSADQPLSGTTVP. A disordered region spans residues 1-28; sequence MTSNPSSSADQPLSGTTVPGSVPGKAPE. 2 consecutive transmembrane segments (helical) span residues 38–58 and 76–96; these read AAVW…LIFI and LPLG…TVFA.

It is found in the cell membrane. This is an uncharacterized protein from Mycobacterium tuberculosis (strain ATCC 25618 / H37Rv).